The following is a 145-amino-acid chain: 3-dehydroquinate dehydratase (145 aa).

Residue Y22 is the Proton acceptor of the active site. Residues N71, H77, and D84 each coordinate substrate. The active-site Proton donor is H97. Residues 98–99 (LS) and R108 contribute to the substrate site.

The protein belongs to the type-II 3-dehydroquinase family. Homododecamer.

The catalysed reaction is 3-dehydroquinate = 3-dehydroshikimate + H2O. It participates in metabolic intermediate biosynthesis; chorismate biosynthesis; chorismate from D-erythrose 4-phosphate and phosphoenolpyruvate: step 3/7. Functionally, catalyzes a trans-dehydration via an enolate intermediate. In Francisella philomiragia subsp. philomiragia (strain ATCC 25017 / CCUG 19701 / FSC 153 / O#319-036), this protein is 3-dehydroquinate dehydratase.